The following is a 1097-amino-acid chain: DNA-directed RNA polymerase subunit beta (1097 aa).

The disordered stretch occupies residues 1073–1097 (DINPRRNTPSRPTYESLGTSEYEED). The segment covering 1077 to 1091 (RRNTPSRPTYESLGT) has biased composition (polar residues).

The protein belongs to the RNA polymerase beta chain family. As to quaternary structure, in cyanobacteria the RNAP catalytic core is composed of 2 alpha, 1 beta, 1 beta', 1 gamma and 1 omega subunit. When a sigma factor is associated with the core the holoenzyme is formed, which can initiate transcription.

The catalysed reaction is RNA(n) + a ribonucleoside 5'-triphosphate = RNA(n+1) + diphosphate. Its function is as follows. DNA-dependent RNA polymerase catalyzes the transcription of DNA into RNA using the four ribonucleoside triphosphates as substrates. The chain is DNA-directed RNA polymerase subunit beta from Prochlorococcus marinus (strain MIT 9312).